The primary structure comprises 442 residues: MMNHPHSSHIGTTNVKEEIGKLDRIRISGIGLIAYAFMAVLLIIAISTKTLPNTMIGAIFALVLMGHVFYYLGAHLPIFRSYLGGGSVFTILLTAILVATNVIPKYVVTTASGFINGMDFLGLYIVSLIASSLFKMDRKMLLKAAVRFLPVAFISMALTAVVIGIVGVIIGVGFNYAILYIAMPIMAGGVGAGIVPLSGIYAHAMGVGSAGILSKLFPTVILGNLLAIISAGLISRIFKDSKGNGHGEILRGEREKSAAAEEIKPDYVQLGVGLIIAVMFFMIGTMLNKVFPGINAYAFIILSIVLTKAFGLLPKYYEDSVIMFGQVIVKNMTHALLAGVGLSLLDMHVLLAALSWQFVVLCLVSIVAISLISATLGKLFGLYPVEAAITAGLANNSMGGTGNVAVLAASERMNLIAFAQMGNRIGGALILVVAGILVTFMK.

Helical transmembrane passes span 27-47 (ISGI…IAIS), 59-79 (IFAL…LPIF), 83-103 (LGGG…TNVI), 114-134 (FING…SSLF), 151-171 (VAFI…VIIG), 177-197 (AILY…IVPL), 209-229 (SAGI…LAII), 267-287 (YVQL…GTML), 293-313 (GINA…FGLL), 321-341 (VIMF…AGVG), 349-369 (VLLA…IVAI), 387-409 (AAIT…VLAA), and 421-441 (MGNR…VTFM).

This sequence belongs to the 2-hydroxycarboxylate transporter (2-HCT) (TC 2.A.24) family.

The protein localises to the cell membrane. The catalysed reaction is (R)-lactate(in) + citrate(out) = (R)-lactate(out) + citrate(in). It carries out the reaction (S)-lactate(in) + citrate(out) = (S)-lactate(out) + citrate(in). It catalyses the reaction citrate(in) + H(+)(in) = citrate(out) + H(+)(out). The transport of citrate is unaffected by the presence of citrate in the growth media. Secondary transporter involved in citrate metabolism. During cometabolism of citrate and glucose, catalyzes the uptake of divalent citrate into the cell coupled to the exit of monovalent lactate, the end product of glycolysis in L.lactis. The citrate/lactate exchange is electrogenic and results in the generation of a membrane potential. Plays an important role in resistance against lactate toxicity at low pH. In the absence of glucose, i.e. when no lactate is produced, CitP catalyzes the uptake of citrate in exchange with the citrate metabolism intermediates pyruvate and alpha-acetolactate, and the end product acetate. In the absence of glucose, CitP can also catalyze the proton-dependent transport of citrate. In vitro, shows a broad substrate specificity. Can transport a wide variety of mono- and dicarboxylates of the form X-CR(2)-COO(-), where X represents OH (2-hydroxy acid), O (2-keto acid), or H (acid) and R groups differ in size, hydrophobicity and composition. Many of the substrates are intermediates or products of amino acid metabolism, suggesting that CitP may have a broader physiological function than its role in citrate metabolism. In Lactococcus lactis subsp. lactis (Streptococcus lactis), this protein is Citrate transporter CitP.